The following is a 1294-amino-acid chain: CLIP-associating protein 2 (1294 aa).

The disordered stretch occupies residues 1–61 (MAMGDDKSFD…KVGGASKEGG (61 aa)). Ser-8 and Ser-14 each carry phosphoserine. A compositionally biased stretch (gly residues) spans 47–61 (SAGGPKVGGASKEGG). Residues 60-311 (GGAGAVDEDD…KSLQTYLKSS (252 aa)) are TOG 1. HEAT repeat units lie at residues 173 to 208 (HGAEAIVPTLFNLVPNSAKVMATSGCAAIRFIIRHT), 209 to 245 (HVPRLIPLITSNCTSKSVPVRRRSFEFLDLLLQEWQT), and 250 to 287 (RHAAVLVETIKKGIHDADAEARVEARKTYMGLRNHFPG). Residues 314 to 368 (VASLPQSDRSSSSSQESLNRPFSSKWSTANPSTVAGRVSAGSSKASSLPGSLQRS) are disordered. Phosphoserine is present on residues Ser-316, Ser-327, and Ser-330. A compositionally biased stretch (low complexity) spans 316–334 (SLPQSDRSSSSSQESLNRP). Composition is skewed to polar residues over residues 335-346 (FSSKWSTANPST) and 353-367 (AGSSKASSLPGSLQR). Phosphoserine occurs at positions 360, 368, 370, and 407. The segment at 409–467 (EDTSDKLDGTASEDGRVRAKLSAPLAGMGNAKADSRGRSRTKMVSQSQPGSRSGSPGRV) is disordered. Over residues 411–425 (TSDKLDGTASEDGRV) the composition is skewed to basic and acidic residues. Residues 444 to 580 (RGRSRTKMVS…GPGYGISQSS (137 aa)) form an interaction with microtubules, MAPRE1 and MAPRE3 region. The segment covering 453 to 467 (SQSQPGSRSGSPGRV) has biased composition (low complexity). Ser-455, Ser-459, Ser-463, Ser-478, and Ser-489 each carry phosphoserine. Residues 488 to 557 (ASAQKRSKIP…PLASRHHSRS (70 aa)) are disordered. The SXIP motif 1; mediates interaction with MAPRE1 and targeting to microtubule plus ends motif lies at 494 to 497 (SKIP). Ser-507 is modified (phosphoserine). The short motif at 517–520 (SRIP) is the SXIP motif 2; mediates interaction with MAPRE1 and targeting to microtubule plus ends element. Phosphoserine is present on residues Ser-525, Ser-529, Ser-585, Ser-587, Ser-596, Ser-621, and Ser-627. Residues 617 to 645 (YGMHSDDDANSDASSACSERSYSSRNGSI) form a disordered region. Residues 627–641 (SDASSACSERSYSSR) are compositionally biased toward low complexity. The TOG 2 stretch occupies residues 649–881 (MRQTEDVAEV…TKLLHNHLRN (233 aa)). 2 HEAT repeats span residues 710–747 (RVFSMFLETLVDFIQVHKDDLQDWLFVLLTQLLKKMGA) and 772–809 (LQFNILMRFTVDQTQTPSLKVKVAILKYIETLAKQMDP). A Phosphothreonine modification is found at Thr-787. The interval 872–1294 (TKLLHNHLRN…DPTTDVSGQS (423 aa)) is interaction with RSN and localization to the Golgi and kinetochores. Disordered regions lie at residues 878–928 (HLRN…FDYD) and 952–995 (SFRS…DSSQ). Polar residues-rich tracts occupy residues 880 to 892 (RNTGNGTQSSMGS) and 901 to 922 (SPANWSSPLTSPTNTSQNTLSP). The residue at position 892 (Ser-892) is a Phosphoserine. A phosphoserine mark is found at Ser-952, Ser-955, Ser-1013, and Ser-1029. The span at 955 to 972 (SQEDMNEPLKRDSKKDDG) shows a compositional bias: basic and acidic residues. Positions 1017–1294 (RDYNPYNYSD…DPTTDVSGQS (278 aa)) are required for cortical localization. HEAT repeat units lie at residues 1054–1091 (LDHSDLVAELLKELSNHNERVEERKIALYELMKLTQEE), 1098–1135 (EHFKTILLLLLETLGDKEPTIRALALKVLREILRHQPA), and 1216–1253 (LLLPEIMPGLIQGYDNSESSVRKACVFCLVAVHAVIGD).

Belongs to the CLASP family. Interacts with microtubules. Interacts with MAPRE1; probably required for targeting to the growing microtubule plus ends. Interacts with CLIP2, ERC1, MAPRE3, PHLDB2 and RSN. The interaction with ERC1 may be mediated by PHLDB2. Interacts with GCC2; recruits CLASP2 to Golgi membranes. Interacts with MACF1. Interacts with mtcl2 and MTCL1. Phosphorylated by GSK3B. Phosphorylation reduces MAPRE1 binding. Phosphorylation by GSK3B may negatively regulate binding to microtubule lattices in lamella. Brain-specific.

It is found in the cytoplasm. The protein resides in the cytoskeleton. The protein localises to the microtubule organizing center. It localises to the centrosome. Its subcellular location is the chromosome. It is found in the centromere. The protein resides in the kinetochore. The protein localises to the spindle. It localises to the golgi apparatus. Its subcellular location is the trans-Golgi network. It is found in the cell membrane. The protein resides in the cell projection. The protein localises to the ruffle membrane. It localises to the cell cortex. Microtubule plus-end tracking protein that promotes the stabilization of dynamic microtubules. Involved in the nucleation of noncentrosomal microtubules originating from the trans-Golgi network (TGN). Required for the polarization of the cytoplasmic microtubule arrays in migrating cells towards the leading edge of the cell. May act at the cell cortex to enhance the frequency of rescue of depolymerizing microtubules by attaching their plus-ends to cortical platforms composed of ERC1 and PHLDB2. This cortical microtubule stabilizing activity is regulated at least in part by phosphatidylinositol 3-kinase signaling. Also performs a similar stabilizing function at the kinetochore which is essential for the bipolar alignment of chromosomes on the mitotic spindle. Acts as a mediator of ERBB2-dependent stabilization of microtubules at the cell cortex. In Homo sapiens (Human), this protein is CLIP-associating protein 2 (CLASP2).